Here is a 206-residue protein sequence, read N- to C-terminus: Ribonuclease HII (206 aa).

An RNase H type-2 domain is found at 18–206; the sequence is GRVAGVDEVG…PVREWLEANS (189 aa). Residues Asp-24, Glu-25, and Asp-116 each contribute to the a divalent metal cation site.

This sequence belongs to the RNase HII family. It depends on Mn(2+) as a cofactor. Mg(2+) serves as cofactor.

It is found in the cytoplasm. It catalyses the reaction Endonucleolytic cleavage to 5'-phosphomonoester.. Endonuclease that specifically degrades the RNA of RNA-DNA hybrids. The sequence is that of Ribonuclease HII from Shewanella amazonensis (strain ATCC BAA-1098 / SB2B).